The chain runs to 505 residues: Maturase K (505 aa).

This sequence belongs to the intron maturase 2 family. MatK subfamily.

The protein resides in the plastid. Its subcellular location is the chloroplast. In terms of biological role, usually encoded in the trnK tRNA gene intron. Probably assists in splicing its own and other chloroplast group II introns. The protein is Maturase K of Dioon edule (Virgin's palm).